Here is a 605-residue protein sequence, read N- to C-terminus: Protein phosphatase 1D (605 aa).

Residues 1–101 (MAGLYSLGVS…CRRRSSVAFF (101 aa)) are interaction with CHEK1. Residues 8-375 (GVSVFSDQGG…DNTSAIVICI (368 aa)) form the PPM-type phosphatase domain. Residues 28 to 90 (VVEPEPTAEE…DAGASPAPSR (63 aa)) are disordered. 2 positions are modified to phosphoserine: S40 and S85. Mn(2+) is bound by residues D105, G106, D314, and D366. Positions 516–591 (STPGQMKAQE…RRLRGQKKIG (76 aa)) are disordered. Composition is skewed to polar residues over residues 530–544 (PPTN…SNSG) and 555–577 (LSRS…NSVK). The segment covering 579 to 588 (TMRRRLRGQK) has biased composition (basic residues).

The protein belongs to the PP2C family. In terms of assembly, interacts with CHEK1 and CHEK2; dephosphorylates them. Interacts with MAPK14. It depends on Mg(2+) as a cofactor. Mn(2+) serves as cofactor. Expressed in fetal and adult brain. Also detected in fetal liver and skeletal muscle, but not in their adult counterparts.

It is found in the nucleus. The protein resides in the cytoplasm. The protein localises to the cytosol. It catalyses the reaction O-phospho-L-seryl-[protein] + H2O = L-seryl-[protein] + phosphate. The enzyme catalyses O-phospho-L-threonyl-[protein] + H2O = L-threonyl-[protein] + phosphate. Involved in the negative regulation of p53 expression. Required for the relief of p53-dependent checkpoint mediated cell cycle arrest. Binds to and dephosphorylates 'Ser-15' of TP53 and 'Ser-345' of CHEK1 which contributes to the functional inactivation of these proteins. Mediates MAPK14 dephosphorylation and inactivation. Is also an important regulator of global heterochromatin silencing and critical in maintaining genome integrity. The polypeptide is Protein phosphatase 1D (PPM1D) (Homo sapiens (Human)).